Here is a 203-residue protein sequence, read N- to C-terminus: Histone deacetylase HDT4 (203 aa).

Residues 2–5 (EFWG) are required to repress transcription. The disordered stretch occupies residues 121–203 (AALPQNEINP…PFPCGPSCKK (83 aa)). Acidic residues predominate over residues 129-157 (NPEEDDESDSDEMGLDEDDDSSDEEDVEA). The segment covering 180–193 (GGKKNKSSGGKKRC) has biased composition (basic residues).

This sequence belongs to the histone deacetylase HD2 family. As to expression, confined to stems and flowers with young siliques.

The protein resides in the nucleus. It is found in the nucleolus. Its function is as follows. Probably mediates the deacetylation of lysine residues lysine residues on the N-terminal part of the core histones (H2A, H2B, H3 and H4). Histone deacetylation gives a tag for epigenetic repression and plays an important role in transcriptional regulation, cell cycle progression and developmental events. The polypeptide is Histone deacetylase HDT4 (HDT4) (Arabidopsis thaliana (Mouse-ear cress)).